Here is a 140-residue protein sequence, read N- to C-terminus: Putative pre-16S rRNA nuclease (140 aa).

It belongs to the YqgF nuclease family.

It localises to the cytoplasm. Functionally, could be a nuclease involved in processing of the 5'-end of pre-16S rRNA. The sequence is that of Putative pre-16S rRNA nuclease from Aeromonas hydrophila subsp. hydrophila (strain ATCC 7966 / DSM 30187 / BCRC 13018 / CCUG 14551 / JCM 1027 / KCTC 2358 / NCIMB 9240 / NCTC 8049).